The primary structure comprises 175 residues: Sec-independent protein translocase protein TatB (175 aa).

A helical membrane pass occupies residues 1-21 (MLDLGLSKMALIGVVALVVLG). Over residues 96-115 (VSPGGSAAADAPDGPSAASG) the composition is skewed to low complexity. Disordered regions lie at residues 96–119 (VSPG…EPSW) and 152–175 (QVQS…ARFL). Residues 160-175 (VARHRPASLRRPARFL) show a composition bias toward basic residues.

Belongs to the TatB family. The Tat system comprises two distinct complexes: a TatABC complex, containing multiple copies of TatA, TatB and TatC subunits, and a separate TatA complex, containing only TatA subunits. Substrates initially bind to the TatABC complex, which probably triggers association of the separate TatA complex to form the active translocon.

The protein resides in the cell inner membrane. In terms of biological role, part of the twin-arginine translocation (Tat) system that transports large folded proteins containing a characteristic twin-arginine motif in their signal peptide across membranes. Together with TatC, TatB is part of a receptor directly interacting with Tat signal peptides. TatB may form an oligomeric binding site that transiently accommodates folded Tat precursor proteins before their translocation. This is Sec-independent protein translocase protein TatB from Burkholderia pseudomallei (strain 1710b).